Here is a 421-residue protein sequence, read N- to C-terminus: MKKRLNIGLVGLGCVGSAVAKILQENQEIIKDRAGVGIGIKKAVVRDVKKHKGYPFEISNDLESLIEDEEIDIVVELMGGVEAPYLLAKKTLAKQKAFVTANKAMLAYHRYELEQTAKNTPIGFEASVCGGIPIIKALKDGLSANHILSFKGILNGTSNYILSQMFKNQASFKDALKDAQHLGYAELNPEFDIKGIDAAHKLLILASLAYGIDAKLEEILIEGIEKIEPDDMEFAKEFGYSIKLLGIAKKHPDCIELRVHPSMIKNECMLSKVDGVMNAISVIGDKVGETLYYGAGAGGEPTASAVISDIIEIARKKSSLMLGFETPQKLPLKPKEEIQCAYYARLLVSDEKGVFSQISAILAQNDISLNNVLQKEILHSNKAKILFSTHTTNEKSMLNALKELENLQSVLDTPKMIRLEN.

NAD(+)-binding residues include V15, A34, and V44. V15 is an NADP(+) binding site. V15 lines the NADPH pocket. NADP(+)-binding residues include R46 and K103. The NADPH site is built by R46 and K103. Residues E125, V128, G130, and I132 each contribute to the Na(+) site. Residues G183 and E186 each contribute to the NADP(+) site. L-homoserine contacts are provided by E186 and D197. The active-site Proton donor is the K201. G298 lines the NAD(+) pocket. G298 provides a ligand contact to NADP(+). G298 lines the NADPH pocket. The ACT domain occupies 343–418 (YARLLVSDEK…SVLDTPKMIR (76 aa)).

This sequence belongs to the homoserine dehydrogenase family. The cofactor is a metal cation.

The enzyme catalyses L-homoserine + NADP(+) = L-aspartate 4-semialdehyde + NADPH + H(+). The catalysed reaction is L-homoserine + NAD(+) = L-aspartate 4-semialdehyde + NADH + H(+). Its pathway is amino-acid biosynthesis; L-methionine biosynthesis via de novo pathway; L-homoserine from L-aspartate: step 3/3. The protein operates within amino-acid biosynthesis; L-threonine biosynthesis; L-threonine from L-aspartate: step 3/5. Its function is as follows. Catalyzes the conversion of L-aspartate-beta-semialdehyde (L-Asa) to L-homoserine (L-Hse), the third step in the biosynthesis of threonine and methionine from aspartate. In Helicobacter pylori (strain ATCC 700392 / 26695) (Campylobacter pylori), this protein is Homoserine dehydrogenase (hom).